We begin with the raw amino-acid sequence, 156 residues long: Ribosome maturation factor RimP (156 aa).

This sequence belongs to the RimP family.

It is found in the cytoplasm. Required for maturation of 30S ribosomal subunits. In Shouchella clausii (strain KSM-K16) (Alkalihalobacillus clausii), this protein is Ribosome maturation factor RimP.